A 483-amino-acid chain; its full sequence is Regulatory protein ViaA (483 aa).

Belongs to the ViaA family. In terms of assembly, homodimer. Interacts with RavA.

The protein localises to the cytoplasm. Functionally, component of the RavA-ViaA chaperone complex, which may act on the membrane to optimize the function of some of the respiratory chains. ViaA stimulates the ATPase activity of RavA. The polypeptide is Regulatory protein ViaA (Escherichia coli O7:K1 (strain IAI39 / ExPEC)).